Here is a 490-residue protein sequence, read N- to C-terminus: Betaine aldehyde dehydrogenase (490 aa).

Residues Thr-26, Ile-27, and Asp-93 each contribute to the K(+) site. 150 to 152 (GAW) serves as a coordination point for NAD(+). The Charge relay system role is filled by Lys-162. 176-179 (KPSE) is a binding site for NAD(+). K(+) is bound at residue Val-180. NAD(+) is bound at residue 230-233 (GVAS). Leu-246 serves as a coordination point for K(+). Residue Glu-252 is the Proton acceptor of the active site. Gly-254, Cys-286, and Glu-387 together coordinate NAD(+). The Nucleophile role is filled by Cys-286. A Cysteine sulfenic acid (-SOH) modification is found at Cys-286. 2 residues coordinate K(+): Lys-457 and Gly-460. The Charge relay system role is filled by Glu-464.

This sequence belongs to the aldehyde dehydrogenase family. As to quaternary structure, dimer of dimers. K(+) is required as a cofactor.

It carries out the reaction betaine aldehyde + NAD(+) + H2O = glycine betaine + NADH + 2 H(+). It functions in the pathway amine and polyamine biosynthesis; betaine biosynthesis via choline pathway; betaine from betaine aldehyde: step 1/1. Its function is as follows. Involved in the biosynthesis of the osmoprotectant glycine betaine. Catalyzes the irreversible oxidation of betaine aldehyde to the corresponding acid. In Shigella flexneri serotype 5b (strain 8401), this protein is Betaine aldehyde dehydrogenase.